A 194-amino-acid polypeptide reads, in one-letter code: Protein GrpE (194 aa).

Residues 1–12 (MNKQKNNRERTP) show a composition bias toward basic and acidic residues. A disordered region spans residues 1-44 (MNKQKNNRERTPQPEQDTERDEQLTNSHENDIDSAPAAEENDKV).

The protein belongs to the GrpE family. As to quaternary structure, homodimer.

The protein localises to the cytoplasm. Participates actively in the response to hyperosmotic and heat shock by preventing the aggregation of stress-denatured proteins, in association with DnaK and GrpE. It is the nucleotide exchange factor for DnaK and may function as a thermosensor. Unfolded proteins bind initially to DnaJ; upon interaction with the DnaJ-bound protein, DnaK hydrolyzes its bound ATP, resulting in the formation of a stable complex. GrpE releases ADP from DnaK; ATP binding to DnaK triggers the release of the substrate protein, thus completing the reaction cycle. Several rounds of ATP-dependent interactions between DnaJ, DnaK and GrpE are required for fully efficient folding. This Porphyromonas gingivalis (strain ATCC BAA-308 / W83) protein is Protein GrpE.